The chain runs to 431 residues: Urokinase-type plasminogen activator (431 aa).

Residues 1–20 (MRALLARLLLCVLVVSDSKG) form the signal peptide. In terms of domain architecture, EGF-like spans 27–63 (VPSNCDCLNGGTCVSNKYFSNIHWCNCPKKFGGQHCE). 6 disulfide bridges follow: cysteine 31/cysteine 39, cysteine 33/cysteine 51, cysteine 53/cysteine 62, cysteine 70/cysteine 151, cysteine 91/cysteine 133, and cysteine 122/cysteine 146. The tract at residues 34–57 (LNGGTCVSNKYFSNIHWCNCPKKF) is binds urokinase plasminogen activator surface receptor. One can recognise a Kringle domain in the interval 69 to 151 (TCYEGNGHFY…LVQECMVHDC (83 aa)). Residues 152 to 178 (ADGKKPSSPPEELKFQCGQKTLRPRFK) are connecting peptide. A Phosphoserine modification is found at serine 158. Intrachain disulfides connect cysteine 168/cysteine 299, cysteine 209/cysteine 225, cysteine 217/cysteine 288, cysteine 313/cysteine 382, cysteine 345/cysteine 361, and cysteine 372/cysteine 400. Positions 179 to 424 (IVGGEFTTIE…FLPWIRSHTK (246 aa)) constitute a Peptidase S1 domain. Catalysis depends on charge relay system residues histidine 224 and aspartate 275. The N-linked (GlcNAc...) asparagine glycan is linked to asparagine 322. Serine 323 bears the Phosphoserine mark. The Charge relay system role is filled by serine 376.

The protein belongs to the peptidase S1 family. Found in high and low molecular mass forms. Each consists of two chains, A and B. The high molecular mass form contains a long chain A which is cleaved to yield a short chain A. Forms heterodimer with SERPINA5. Binds LRP1B; binding is followed by internalization and degradation. Interacts with MRC2. Interacts with PLAUR. In complex with SERPINE1, interacts with PLAUR/uPAR. Interacts with SORL1 and LRP1, either alone or in complex with SERPINE1; these interactions are abolished in the presence of LRPAP1/RAP. The ternary complex composed of PLAUR-PLAU-PAI1 also interacts with SORLA. Post-translationally, phosphorylation of Ser-158 and Ser-323 abolishes proadhesive ability but does not interfere with receptor binding. In terms of processing, produced as an inactive single-chain protein (pro-uPA or sc-uPA), is processed into the active disulfide-linked two-chain form of PLAU/uPA by a proteolytic event mediated, at least, by TMPRSS4.

It localises to the secreted. It carries out the reaction Specific cleavage of Arg-|-Val bond in plasminogen to form plasmin.. Its activity is regulated as follows. Inhibited by SERPINA5. Inhibited by SERPINE1. Its function is as follows. Specifically cleaves the zymogen plasminogen to form the active enzyme plasmin. This Pongo abelii (Sumatran orangutan) protein is Urokinase-type plasminogen activator (PLAU).